Here is an 89-residue protein sequence, read N- to C-terminus: Small ribosomal subunit protein uS15 (89 aa).

Belongs to the universal ribosomal protein uS15 family. Part of the 30S ribosomal subunit. Forms a bridge to the 50S subunit in the 70S ribosome, contacting the 23S rRNA.

In terms of biological role, one of the primary rRNA binding proteins, it binds directly to 16S rRNA where it helps nucleate assembly of the platform of the 30S subunit by binding and bridging several RNA helices of the 16S rRNA. Functionally, forms an intersubunit bridge (bridge B4) with the 23S rRNA of the 50S subunit in the ribosome. This Nitrosococcus oceani (strain ATCC 19707 / BCRC 17464 / JCM 30415 / NCIMB 11848 / C-107) protein is Small ribosomal subunit protein uS15.